A 254-amino-acid polypeptide reads, in one-letter code: Floral homeotic protein APETALA 1 (254 aa).

One can recognise an MADS-box domain in the interval 3 to 57 (RGRVQLKRIENKINRQVTFSKRRAGLLKKAHEISVLCDAEVALVVFSHKGKLFEY). A K-box domain is found at 88-178 (NTNWSMEYNR…SKQIKEREKI (91 aa)).

The protein localises to the nucleus. Its function is as follows. Controls floral meristem identity. Is also required for normal development of sepals and petals. Is required for the transition of an influorescence meristem into a floral meristem. Interacts with LEAFY. The polypeptide is Floral homeotic protein APETALA 1 (AP1) (Sinapis alba (White mustard)).